The primary structure comprises 186 residues: Elongation factor P (186 aa).

Belongs to the elongation factor P family.

The protein resides in the cytoplasm. Its pathway is protein biosynthesis; polypeptide chain elongation. Functionally, involved in peptide bond synthesis. Stimulates efficient translation and peptide-bond synthesis on native or reconstituted 70S ribosomes in vitro. Probably functions indirectly by altering the affinity of the ribosome for aminoacyl-tRNA, thus increasing their reactivity as acceptors for peptidyl transferase. The polypeptide is Elongation factor P (Cupriavidus necator (strain ATCC 17699 / DSM 428 / KCTC 22496 / NCIMB 10442 / H16 / Stanier 337) (Ralstonia eutropha)).